Reading from the N-terminus, the 93-residue chain is Integration host factor subunit beta (93 aa).

Positions 59-93 (RVGRNPKTGQSVSLDGKFVPHFKPGKELRDRVNDD) are disordered. Residues 82-93 (PGKELRDRVNDD) are compositionally biased toward basic and acidic residues.

Belongs to the bacterial histone-like protein family. Heterodimer of an alpha and a beta chain.

Functionally, this protein is one of the two subunits of integration host factor, a specific DNA-binding protein that functions in genetic recombination as well as in transcriptional and translational control. The chain is Integration host factor subunit beta from Stutzerimonas stutzeri (strain A1501) (Pseudomonas stutzeri).